We begin with the raw amino-acid sequence, 162 residues long: uncharacterized protein (162 aa).

The segment at 1–23 is disordered; that stretch reads MAQLPLSPAPQRPETKTPGKPEA. Residues 13–23 are compositionally biased toward basic and acidic residues; it reads PETKTPGKPEA.

This is an uncharacterized protein from Rhodobacter capsulatus (Rhodopseudomonas capsulata).